Reading from the N-terminus, the 272-residue chain is Protein FAM210A (272 aa).

Residues 117–229 (DKSISLYQRF…GYMSTPPPVK (113 aa)) enclose the DUF1279 domain. Residues 136–156 (VLIPVHLITSGVWFGTFYYAA) traverse the membrane as a helical segment. The stretch at 229–271 (KEYLQDRMEETKELITEKMEETKDRLTEKLQETKEKVSFKKKV) forms a coiled coil. Positions 246–272 (KMEETKDRLTEKLQETKEKVSFKKKVE) are disordered.

It belongs to the FAM210 family. In terms of assembly, interacts with ATAD3A.

It localises to the membrane. The protein localises to the mitochondrion. Its subcellular location is the cytoplasm. Its function is as follows. May play a role in the structure and strength of both muscle and bone. This is Protein FAM210A (FAM210A) from Pongo abelii (Sumatran orangutan).